Here is a 274-residue protein sequence, read N- to C-terminus: Probable WRKY transcription factor 49 (274 aa).

Positions 108–173 (NSNGMCDDGY…YEGFHFHYTY (66 aa)) form a DNA-binding region, WRKY. The segment at 188 to 228 (KTKIHKHNAQDMNKKSQTQEESKEAQLGELTNQNHPVNKAQ) is disordered. A coiled-coil region spans residues 193–222 (KHNAQDMNKKSQTQEESKEAQLGELTNQNH). The segment covering 195-213 (NAQDMNKKSQTQEESKEAQ) has biased composition (basic and acidic residues). Over residues 216-228 (ELTNQNHPVNKAQ) the composition is skewed to polar residues.

This sequence belongs to the WRKY group II-c family.

Its subcellular location is the nucleus. In terms of biological role, transcription factor. Interacts specifically with the W box (5'-(T)TGAC[CT]-3'), a frequently occurring elicitor-responsive cis-acting element. The sequence is that of Probable WRKY transcription factor 49 (WRKY49) from Arabidopsis thaliana (Mouse-ear cress).